A 276-amino-acid polypeptide reads, in one-letter code: Dermonecrotic toxin LlSicTox-alphaIV2iii (276 aa).

His5 is a catalytic residue. Residues Glu25 and Asp27 each contribute to the Mg(2+) site. His41 acts as the Nucleophile in catalysis. 2 disulfides stabilise this stretch: Cys45–Cys51 and Cys47–Cys193. Mg(2+) is bound at residue Asp85.

Belongs to the arthropod phospholipase D family. Class II subfamily. The cofactor is Mg(2+). As to expression, expressed by the venom gland.

The protein localises to the secreted. The catalysed reaction is an N-(acyl)-sphingosylphosphocholine = an N-(acyl)-sphingosyl-1,3-cyclic phosphate + choline. It catalyses the reaction an N-(acyl)-sphingosylphosphoethanolamine = an N-(acyl)-sphingosyl-1,3-cyclic phosphate + ethanolamine. The enzyme catalyses a 1-acyl-sn-glycero-3-phosphocholine = a 1-acyl-sn-glycero-2,3-cyclic phosphate + choline. It carries out the reaction a 1-acyl-sn-glycero-3-phosphoethanolamine = a 1-acyl-sn-glycero-2,3-cyclic phosphate + ethanolamine. Dermonecrotic toxins cleave the phosphodiester linkage between the phosphate and headgroup of certain phospholipids (sphingolipid and lysolipid substrates), forming an alcohol (often choline) and a cyclic phosphate. This toxin acts on sphingomyelin (SM). It may also act on ceramide phosphoethanolamine (CPE), lysophosphatidylcholine (LPC) and lysophosphatidylethanolamine (LPE), but not on lysophosphatidylserine (LPS), and lysophosphatidylglycerol (LPG). It acts by transphosphatidylation, releasing exclusively cyclic phosphate products as second products. Induces dermonecrosis, hemolysis, increased vascular permeability, edema, inflammatory response, and platelet aggregation. This is Dermonecrotic toxin LlSicTox-alphaIV2iii from Loxosceles laeta (South American recluse spider).